Reading from the N-terminus, the 95-residue chain is Small ribosomal subunit protein bS6 (95 aa).

Belongs to the bacterial ribosomal protein bS6 family.

Its function is as follows. Binds together with bS18 to 16S ribosomal RNA. This chain is Small ribosomal subunit protein bS6, found in Bacillus licheniformis (strain ATCC 14580 / DSM 13 / JCM 2505 / CCUG 7422 / NBRC 12200 / NCIMB 9375 / NCTC 10341 / NRRL NRS-1264 / Gibson 46).